A 323-amino-acid polypeptide reads, in one-letter code: Ribose-phosphate pyrophosphokinase (323 aa).

ATP is bound by residues 38 to 40 and 96 to 97; these read DGE and RQ. Positions 130 and 170 each coordinate Mg(2+). Residue K193 is part of the active site. D-ribose 5-phosphate is bound by residues R195, D219, and 223-227; that span reads DTAGT.

It belongs to the ribose-phosphate pyrophosphokinase family. Class I subfamily. Homohexamer. Requires Mg(2+) as cofactor.

The protein localises to the cytoplasm. It catalyses the reaction D-ribose 5-phosphate + ATP = 5-phospho-alpha-D-ribose 1-diphosphate + AMP + H(+). Its pathway is metabolic intermediate biosynthesis; 5-phospho-alpha-D-ribose 1-diphosphate biosynthesis; 5-phospho-alpha-D-ribose 1-diphosphate from D-ribose 5-phosphate (route I): step 1/1. Its function is as follows. Involved in the biosynthesis of the central metabolite phospho-alpha-D-ribosyl-1-pyrophosphate (PRPP) via the transfer of pyrophosphoryl group from ATP to 1-hydroxyl of ribose-5-phosphate (Rib-5-P). This Chlorobaculum tepidum (strain ATCC 49652 / DSM 12025 / NBRC 103806 / TLS) (Chlorobium tepidum) protein is Ribose-phosphate pyrophosphokinase.